The primary structure comprises 297 residues: Coiled-coil domain-containing protein 196 (297 aa).

Residues 83–117 (ESSVMELLKEAEEMKQNLERKNKMLRKEMEMLWNK) are a coiled coil. The disordered stretch occupies residues 122–161 (EELSDQQKAPQTKNKADLQDGKAPKSPSSPRKTESELEKS). Composition is skewed to basic and acidic residues over residues 135–144 (NKADLQDGKA) and 152–161 (RKTESELEKS).

The chain is Coiled-coil domain-containing protein 196 from Homo sapiens (Human).